Consider the following 117-residue polypeptide: Immunoglobulin heavy variable 1-45 (117 aa).

A signal peptide spans 1–19 (MDWTWRILFLVAAVTDAYS). The framework-1 stretch occupies residues 20–44 (QMQLVQSGAEVKKTGSSVKVSCKAS). In terms of domain architecture, Ig-like spans 20 to 117 (QMQLVQSGAE…EDTAMYYCAR (98 aa)). Cysteines 41 and 115 form a disulfide. The tract at residues 45–52 (GYTFTYRY) is complementarity-determining-1. The segment at 53–69 (LHWVRQAPGQALEWMGW) is framework-2. The tract at residues 70-77 (ITPFNGNT) is complementarity-determining-2. The tract at residues 78 to 115 (NYAQKFQDRVTITRDRSMSTAYMELSSLRSEDTAMYYC) is framework-3. The interval 116–117 (AR) is complementarity-determining-3.

As to quaternary structure, immunoglobulins are composed of two identical heavy chains and two identical light chains; disulfide-linked.

The protein localises to the secreted. It is found in the cell membrane. Functionally, v region of the variable domain of immunoglobulin heavy chains that participates in the antigen recognition. Immunoglobulins, also known as antibodies, are membrane-bound or secreted glycoproteins produced by B lymphocytes. In the recognition phase of humoral immunity, the membrane-bound immunoglobulins serve as receptors which, upon binding of a specific antigen, trigger the clonal expansion and differentiation of B lymphocytes into immunoglobulins-secreting plasma cells. Secreted immunoglobulins mediate the effector phase of humoral immunity, which results in the elimination of bound antigens. The antigen binding site is formed by the variable domain of one heavy chain, together with that of its associated light chain. Thus, each immunoglobulin has two antigen binding sites with remarkable affinity for a particular antigen. The variable domains are assembled by a process called V-(D)-J rearrangement and can then be subjected to somatic hypermutations which, after exposure to antigen and selection, allow affinity maturation for a particular antigen. In Homo sapiens (Human), this protein is Immunoglobulin heavy variable 1-45.